The primary structure comprises 353 residues: Photosystem II D2 protein (353 aa).

N-acetylthreonine is present on Thr-2. Thr-2 is modified (phosphothreonine). The helical transmembrane segment at 41–61 threads the bilayer; it reads CAYFAVGGWFTGTTFVTSWYT. His-118 lines the chlorophyll a pocket. A helical membrane pass occupies residues 125-141; it reads GFMLRQFELARSVQLRP. Residues Gln-130 and Asn-143 each coordinate pheophytin a. A helical transmembrane segment spans residues 153 to 166; the sequence is VFVSVFLIYPLGQS. His-198 serves as a coordination point for chlorophyll a. The chain crosses the membrane as a helical span at residues 208-228; sequence AALLCAIHGATVENTLFEDGD. 2 residues coordinate a plastoquinone: His-215 and Phe-262. His-215 lines the Fe cation pocket. His-269 contacts Fe cation. The chain crosses the membrane as a helical span at residues 279-295; that stretch reads GLWMSALGVVGLALNLR.

Belongs to the reaction center PufL/M/PsbA/D family. In terms of assembly, PSII is composed of 1 copy each of membrane proteins PsbA, PsbB, PsbC, PsbD, PsbE, PsbF, PsbH, PsbI, PsbJ, PsbK, PsbL, PsbM, PsbT, PsbX, PsbY, PsbZ, Psb30/Ycf12, at least 3 peripheral proteins of the oxygen-evolving complex and a large number of cofactors. It forms dimeric complexes. The cofactor is The D1/D2 heterodimer binds P680, chlorophylls that are the primary electron donor of PSII, and subsequent electron acceptors. It shares a non-heme iron and each subunit binds pheophytin, quinone, additional chlorophylls, carotenoids and lipids. There is also a Cl(-1) ion associated with D1 and D2, which is required for oxygen evolution. The PSII complex binds additional chlorophylls, carotenoids and specific lipids..

The protein localises to the plastid. Its subcellular location is the chloroplast thylakoid membrane. It catalyses the reaction 2 a plastoquinone + 4 hnu + 2 H2O = 2 a plastoquinol + O2. Photosystem II (PSII) is a light-driven water:plastoquinone oxidoreductase that uses light energy to abstract electrons from H(2)O, generating O(2) and a proton gradient subsequently used for ATP formation. It consists of a core antenna complex that captures photons, and an electron transfer chain that converts photonic excitation into a charge separation. The D1/D2 (PsbA/PsbD) reaction center heterodimer binds P680, the primary electron donor of PSII as well as several subsequent electron acceptors. D2 is needed for assembly of a stable PSII complex. The chain is Photosystem II D2 protein from Cucumis sativus (Cucumber).